Consider the following 229-residue polypeptide: DNA mismatch repair protein MutH (229 aa).

This sequence belongs to the MutH family.

Its subcellular location is the cytoplasm. In terms of biological role, sequence-specific endonuclease that cleaves unmethylated GATC sequences. It is involved in DNA mismatch repair. This chain is DNA mismatch repair protein MutH, found in Shigella dysenteriae serotype 1 (strain Sd197).